The primary structure comprises 54 residues: ATP synthase protein 8 (54 aa).

A helical membrane pass occupies residues 9-25 (WVFLFFLVWLVLGFLGL).

It belongs to the ATPase protein 8 family. As to quaternary structure, F-type ATPases have 2 components, CF(1) - the catalytic core - and CF(0) - the membrane proton channel.

It localises to the mitochondrion membrane. Mitochondrial membrane ATP synthase (F(1)F(0) ATP synthase or Complex V) produces ATP from ADP in the presence of a proton gradient across the membrane which is generated by electron transport complexes of the respiratory chain. F-type ATPases consist of two structural domains, F(1) - containing the extramembraneous catalytic core and F(0) - containing the membrane proton channel, linked together by a central stalk and a peripheral stalk. During catalysis, ATP synthesis in the catalytic domain of F(1) is coupled via a rotary mechanism of the central stalk subunits to proton translocation. Part of the complex F(0) domain. Minor subunit located with subunit a in the membrane. In Branchiostoma floridae (Florida lancelet), this protein is ATP synthase protein 8 (MTATP8).